Consider the following 619-residue polypeptide: TOX high mobility group box family member 4 (619 aa).

3 disordered regions span residues 155–227, 304–335, and 436–458; these read LSLG…QKPV, ELDP…TESP, and LPPP…QQQV. The residue at position 176 (Thr-176) is a Phosphothreonine. Ser-178 and Ser-182 each carry phosphoserine. A compositionally biased stretch (basic and acidic residues) spans 183–193; it reads LHEDGVDDFRR. Residues 208 to 218 are compositionally biased toward basic residues; that stretch reads KQKAPKKRKKK. The Nuclear localization signal motif lies at 213-218; sequence KKRKKK. A DNA-binding region (HMG box) is located at residues 223–291; sequence PQKPVSAYAL…EYLKALAAYK (69 aa). Residue Thr-313 is modified to Phosphothreonine. Ser-315 carries the post-translational modification Phosphoserine. The segment covering 320–335 has biased composition (low complexity); sequence TTADPASPAPASTESP. A compositionally biased stretch (pro residues) spans 436–453; it reads LPPPRLQPPPLQQMPQPP. Position 479 is an asymmetric dimethylarginine (Arg-479). Ser-531, Ser-548, Ser-550, Ser-558, Ser-560, and Ser-565 each carry phosphoserine.

Component of the PNUTS-PP1 phosphatase complex, composed of PPP1R10/PNUTS, TOX4, WDR82 and PPP1CA or PPP1CB or PPP1CC. Interacts with PPP1R10/PNUTS. Interacts with FOXO1 and CREB1 (increased by cAMP); FOXO1 and CREB1 are required for full induction of TOX4-dependent activity and the interactions are inhibited by insulin.

The protein localises to the nucleus. Its subcellular location is the chromosome. In liver, recruited to target gene promoters following treatment with dexamethasone and cAMP. Binding is decreased in presence of insulin. Transcription factor that modulates cell fate reprogramming from the somatic state to the pluripotent and neuronal fate. In liver, controls the expression of hormone-regulated gluconeogenic genes such as G6PC1 and PCK1. This regulation is independent of the insulin receptor activation. Also acts as a regulatory component of protein phosphatase 1 (PP1) complexes. Component of the PNUTS-PP1 protein phosphatase complex, a PP1 complex that regulates RNA polymerase II transcription pause-release. PNUTS-PP1 also plays a role in the control of chromatin structure and cell cycle progression during the transition from mitosis into interphase. This Rattus norvegicus (Rat) protein is TOX high mobility group box family member 4 (Tox4).